A 72-amino-acid polypeptide reads, in one-letter code: SRY-related protein MG44 (72 aa).

Positions 1-69 form a DNA-binding region, HMG box; that stretch reads VKRPMNAFMV…KHMADYPNYK (69 aa).

Its subcellular location is the nucleus. The polypeptide is SRY-related protein MG44 (Tarentola mauritanica (Common wall gecko)).